The sequence spans 351 residues: Ribosomal RNA small subunit methyltransferase H (351 aa).

S-adenosyl-L-methionine contacts are provided by residues 48–50 (GGY), Asp-67, Phe-94, Asp-115, and Gln-122. Positions 298-351 (GPVLPSEAETEVNPRARSAKLRAGERTDGPAPPPLSAIETLASLPAPQGRGTRR) are disordered.

This sequence belongs to the methyltransferase superfamily. RsmH family.

It is found in the cytoplasm. It catalyses the reaction cytidine(1402) in 16S rRNA + S-adenosyl-L-methionine = N(4)-methylcytidine(1402) in 16S rRNA + S-adenosyl-L-homocysteine + H(+). Functionally, specifically methylates the N4 position of cytidine in position 1402 (C1402) of 16S rRNA. This Methylorubrum populi (strain ATCC BAA-705 / NCIMB 13946 / BJ001) (Methylobacterium populi) protein is Ribosomal RNA small subunit methyltransferase H.